Consider the following 223-residue polypeptide: MOB-like protein phocein (223 aa).

The segment at methionine 1–asparagine 23 is disordered. Cysteine 92, cysteine 97, histidine 169, and histidine 174 together coordinate Zn(2+).

It belongs to the MOB1/phocein family.

It is found in the cytoplasm. It localises to the perinuclear region. The protein localises to the membrane. The protein resides in the golgi apparatus. Its subcellular location is the golgi stack membrane. May play a role in membrane trafficking, specifically in membrane budding reactions. This Caenorhabditis elegans protein is MOB-like protein phocein.